The chain runs to 349 residues: Anthranilate phosphoribosyltransferase (349 aa).

Residues G86, 89–90 (GD), T94, 96–99 (NIST), 114–122 (KHGNKSASG), and S126 each bind 5-phospho-alpha-D-ribose 1-diphosphate. Residue G86 coordinates anthranilate. S98 provides a ligand contact to Mg(2+). N117 contacts anthranilate. R172 lines the anthranilate pocket. The Mg(2+) site is built by D231 and E232.

It belongs to the anthranilate phosphoribosyltransferase family. As to quaternary structure, homodimer. Requires Mg(2+) as cofactor.

It catalyses the reaction N-(5-phospho-beta-D-ribosyl)anthranilate + diphosphate = 5-phospho-alpha-D-ribose 1-diphosphate + anthranilate. The protein operates within amino-acid biosynthesis; L-tryptophan biosynthesis; L-tryptophan from chorismate: step 2/5. In terms of biological role, catalyzes the transfer of the phosphoribosyl group of 5-phosphorylribose-1-pyrophosphate (PRPP) to anthranilate to yield N-(5'-phosphoribosyl)-anthranilate (PRA). The polypeptide is Anthranilate phosphoribosyltransferase (Prochlorococcus marinus (strain MIT 9312)).